Here is a 421-residue protein sequence, read N- to C-terminus: MVADVLLTHFNQLFCLNDPGHPLTGQEMKKATIVEDGYIAIKDGLIVALGSGEPDAELVGPQTIMRSYKGKIATPGIIDCHTHLVYGGSREHEFAKKLAGVSYLDILAQGGGILSTVRATRSASFDNLYQKSKRLLDYMLLHGVTTVEAKSGYGLDWETEKRQLDVVAALEKDHPIDLVSTFMAAHAIPEEYKGNPKAYLDVIIKDMLPVVKEKNLAEFCDIFCEKNVFTADESRYLLSKAKEMGFKLRIHADEIASIGGVDVAAELSAVSAEHLMMITNDGIAKLIGAGVIGNLLPATTFSLMEDTYAPARKMIDAGMAITLSTDSNPGSCPTANMQFVMQLGCFMLRLTPIEVLNAVTINAAYSVNRQERVGSLTVGKEADIAIFDAPNIDYPFYFFATNLIHQVYKKGQLTVDRGRIL.

2 residues coordinate Fe(3+): His-81 and His-83. Positions 81 and 83 each coordinate Zn(2+). Positions 90, 153, and 186 each coordinate 4-imidazolone-5-propanoate. Tyr-153 provides a ligand contact to N-formimidoyl-L-glutamate. His-251 serves as a coordination point for Fe(3+). Residue His-251 coordinates Zn(2+). 4-imidazolone-5-propanoate is bound at residue Glu-254. Asp-326 serves as a coordination point for Fe(3+). Position 326 (Asp-326) interacts with Zn(2+). Positions 328 and 330 each coordinate N-formimidoyl-L-glutamate. A 4-imidazolone-5-propanoate-binding site is contributed by Ser-331.

Belongs to the metallo-dependent hydrolases superfamily. HutI family. Requires Zn(2+) as cofactor. The cofactor is Fe(3+).

The protein resides in the cytoplasm. The catalysed reaction is 4-imidazolone-5-propanoate + H2O = N-formimidoyl-L-glutamate. It participates in amino-acid degradation; L-histidine degradation into L-glutamate; N-formimidoyl-L-glutamate from L-histidine: step 3/3. Its function is as follows. Catalyzes the hydrolytic cleavage of the carbon-nitrogen bond in imidazolone-5-propanoate to yield N-formimidoyl-L-glutamate. It is the third step in the universal histidine degradation pathway. The polypeptide is Imidazolonepropionase (Streptococcus pyogenes serotype M18 (strain MGAS8232)).